The sequence spans 104 residues: Large ribosomal subunit protein bL21 (104 aa).

Belongs to the bacterial ribosomal protein bL21 family. In terms of assembly, part of the 50S ribosomal subunit. Contacts protein L20.

Functionally, this protein binds to 23S rRNA in the presence of protein L20. In Clostridium botulinum (strain Kyoto / Type A2), this protein is Large ribosomal subunit protein bL21.